The chain runs to 344 residues: tRNA N6-adenosine threonylcarbamoyltransferase (344 aa).

His118 and His122 together coordinate Fe cation. Residues Thr141–Gly145, Asp174, Gly187, and Asn284 contribute to the substrate site. Asp312 provides a ligand contact to Fe cation.

Belongs to the KAE1 / TsaD family. Requires Fe(2+) as cofactor.

The protein resides in the cytoplasm. The catalysed reaction is L-threonylcarbamoyladenylate + adenosine(37) in tRNA = N(6)-L-threonylcarbamoyladenosine(37) in tRNA + AMP + H(+). In terms of biological role, required for the formation of a threonylcarbamoyl group on adenosine at position 37 (t(6)A37) in tRNAs that read codons beginning with adenine. Is involved in the transfer of the threonylcarbamoyl moiety of threonylcarbamoyl-AMP (TC-AMP) to the N6 group of A37, together with TsaE and TsaB. TsaD likely plays a direct catalytic role in this reaction. The polypeptide is tRNA N6-adenosine threonylcarbamoyltransferase (Desulfotalea psychrophila (strain LSv54 / DSM 12343)).